Consider the following 679-residue polypeptide: Protein white (679 aa).

The interval 1 to 34 is disordered; the sequence is MGQEDQEVLIRGGKATSTSAESLNNNNEQPYEQS. The segment covering 15-34 has biased composition (polar residues); sequence ATSTSAESLNNNNEQPYEQS. Residues 84 to 332 form the ABC transporter domain; it reads NRVKGVFCNE…FSYIGATCPT (249 aa). 121–128 is an ATP binding site; the sequence is GSSGAGKT. 5 helical membrane passes run 427 to 445, 457 to 477, 507 to 525, 534 to 555, and 568 to 586; these read LLQT…LGQQ, AIFL…ITVF, LPLF…YPLI, FFTA…GYLI, and VGPP…FLNS. Residues asparagine 628 and asparagine 643 are each glycosylated (N-linked (GlcNAc...) asparagine). Residues 651–670 traverse the membrane as a helical segment; sequence FDFIGLALLIVGFRISAYIA.

Belongs to the ABC transporter superfamily. ABCG family. Eye pigment precursor importer (TC 3.A.1.204) subfamily.

The protein resides in the membrane. May be part of a membrane-spanning permease system necessary for the transport of pigment precursors into pigment cells responsible for eye color. This Ceratitis capitata (Mediterranean fruit fly) protein is Protein white (W).